The chain runs to 695 residues: DSC E3 ubiquitin ligase complex subunit 1 (695 aa).

A signal peptide spans 1-25; the sequence is MDRRRWVPSTPVVTLLLLFMLFAPA. Residues 26-319 are Lumenal-facing; it reads PRLPSRNGES…KGPRNFVLEN (294 aa). The helical transmembrane segment at 320–340 threads the bilayer; it reads HLVRFSSLYIFIVLSQIFVLL. The Cytoplasmic segment spans residues 341-353; the sequence is RQMRINSPSHVQR. A helical transmembrane segment spans residues 354–374; the sequence is LSFLTIAMQAGLDAYIAIFFL. Residues 375 to 382 lie on the Lumenal side of the membrane; that stretch reads STNAVIEK. A helical transmembrane segment spans residues 383 to 403; sequence GYLPFVSVAFLSLVPSVMFTM. Residues 404–486 lie on the Cytoplasmic side of the membrane; it reads RYLALILRVQ…QRDWSAVCLR (83 aa). The interval 419-473 is disordered; that stretch reads PPAPRPVTNNSSNNNTNQSNASNENSPNAPSAANDNTETTTVNPPQEDDQPMTQH. Over residues 427–454 the composition is skewed to low complexity; it reads NNSSNNNTNQSNASNENSPNAPSAANDN. A helical membrane pass occupies residues 487–507; sequence FYFIILVVCIASLYSAFWPVI. Topologically, residues 508–509 are lumenal; sequence YR. The chain crosses the membrane as a helical span at residues 510–530; that stretch reads FYFISALIFTSYSFWIPQIIQ. Residues 531-540 lie on the Cytoplasmic side of the membrane; it reads NVKQGTSRSF. Residues 541-561 form a helical membrane-spanning segment; sequence TWTYILGASVLRLYLPLAIFI. Over 562-572 the chain is Lumenal; the sequence is DSELILGFPPK. Residues 573–593 traverse the membrane as a helical segment; that stretch reads YFFALGLVLWMLFQVLVLLVQ. Residues 594–695 lie on the Cytoplasmic side of the membrane; sequence DTLGPRFFLP…PVCRCHLPAV (102 aa). Residues 634–689 form an RING-type; atypical zinc finger; it reads CPICMQPIELVSTGSTLNPASMMVRRNYMLTPCHHLYHRQCLLQWMETRSICPVCR.

In terms of assembly, component of the DSC E3 ubiquitin ligase complex composed of dsc1, dsc2, dsc3 and dsc4.

Its subcellular location is the endoplasmic reticulum membrane. The protein localises to the golgi apparatus membrane. It catalyses the reaction S-ubiquitinyl-[E2 ubiquitin-conjugating enzyme]-L-cysteine + [acceptor protein]-L-lysine = [E2 ubiquitin-conjugating enzyme]-L-cysteine + N(6)-ubiquitinyl-[acceptor protein]-L-lysine.. The protein operates within protein modification; protein ubiquitination. In terms of biological role, catalytic component of the DSC E3 ubiquitin ligase complex which is required for the sre1 transcriptional activator proteolytic cleavage to release the soluble transcription factor from the membrane in low oxygen or sterol conditions. The complex also plays an important role in the multivesicular body (MVB) pathway and functions in a post-endoplasmic reticulum pathway for protein degradation. The polypeptide is DSC E3 ubiquitin ligase complex subunit 1 (dsc1) (Schizosaccharomyces pombe (strain 972 / ATCC 24843) (Fission yeast)).